A 215-amino-acid chain; its full sequence is Pyrrolidone-carboxylate peptidase (215 aa).

Residues glutamate 80, cysteine 143, and histidine 167 contribute to the active site.

This sequence belongs to the peptidase C15 family. In terms of assembly, homotetramer.

The protein localises to the cytoplasm. The enzyme catalyses Release of an N-terminal pyroglutamyl group from a polypeptide, the second amino acid generally not being Pro.. In terms of biological role, removes 5-oxoproline from various penultimate amino acid residues except L-proline. The sequence is that of Pyrrolidone-carboxylate peptidase from Bacillus cereus (strain ATCC 14579 / DSM 31 / CCUG 7414 / JCM 2152 / NBRC 15305 / NCIMB 9373 / NCTC 2599 / NRRL B-3711).